The following is a 358-amino-acid chain: tRNA pseudouridine synthase D (358 aa).

Asp-84 serves as the catalytic Nucleophile. Positions 161 to 312 (GTPNYFGPQR…RRSLRLMVAD (152 aa)) constitute a TRUD domain.

Belongs to the pseudouridine synthase TruD family.

The catalysed reaction is uridine(13) in tRNA = pseudouridine(13) in tRNA. Its function is as follows. Responsible for synthesis of pseudouridine from uracil-13 in transfer RNAs. The chain is tRNA pseudouridine synthase D from Nitrosococcus oceani (strain ATCC 19707 / BCRC 17464 / JCM 30415 / NCIMB 11848 / C-107).